Here is a 459-residue protein sequence, read N- to C-terminus: Putrescine aminotransferase (459 aa).

Pyridoxal 5'-phosphate-binding positions include glycine 150–threonine 151 and glutamine 274. At lysine 300 the chain carries N6-(pyridoxal phosphate)lysine. Threonine 332 provides a ligand contact to pyridoxal 5'-phosphate.

It belongs to the class-III pyridoxal-phosphate-dependent aminotransferase family. Putrescine aminotransferase subfamily. The cofactor is pyridoxal 5'-phosphate.

It catalyses the reaction an alkane-alpha,omega-diamine + 2-oxoglutarate = an omega-aminoaldehyde + L-glutamate. It carries out the reaction putrescine + 2-oxoglutarate = 1-pyrroline + L-glutamate + H2O. The catalysed reaction is cadaverine + 2-oxoglutarate = 5-aminopentanal + L-glutamate. Its pathway is amine and polyamine degradation; putrescine degradation; 4-aminobutanal from putrescine (transaminase route): step 1/1. Functionally, catalyzes the aminotransferase reaction from putrescine to 2-oxoglutarate, leading to glutamate and 4-aminobutanal, which spontaneously cyclizes to form 1-pyrroline. This is the first step in one of two pathways for putrescine degradation, where putrescine is converted into 4-aminobutanoate (gamma-aminobutyrate or GABA) via 4-aminobutanal. Also functions as a cadaverine transaminase in a a L-lysine degradation pathway to succinate that proceeds via cadaverine, glutarate and L-2-hydroxyglutarate. In Escherichia coli (strain ATCC 8739 / DSM 1576 / NBRC 3972 / NCIMB 8545 / WDCM 00012 / Crooks), this protein is Putrescine aminotransferase.